The sequence spans 148 residues: MATKIKLQRLGKMREPHYRIVVADARTKRDGRVIEAIGQYHPKSDPSIIKVDAERAQHWLSVGAQPTEPVLAILKVTGDWQKFKNLPAPPPMKVAEPKADKREIFQAAARAAAGAEDRPATTPKKAKKAASADGADAPAADAPTAAGQ.

Residues 107-148 (AAARAAAGAEDRPATTPKKAKKAASADGADAPAADAPTAAGQ) are disordered. Positions 129–148 (AASADGADAPAADAPTAAGQ) are enriched in low complexity.

It belongs to the bacterial ribosomal protein bS16 family.

This chain is Small ribosomal subunit protein bS16, found in Frankia alni (strain DSM 45986 / CECT 9034 / ACN14a).